A 117-amino-acid chain; its full sequence is Immunoglobulin kappa variable 1D-16 (117 aa).

The signal sequence occupies residues 1-22 (MDMRVLAQLLGLLLLCFPGARC). The tract at residues 23-45 (DIQMTQSPSSLSASVGDRVTITC) is framework-1. An Ig-like domain is found at 24–117 (IQMTQSPSSL…YYCQQYNSYP (94 aa)). C45 and C110 are joined by a disulfide. The segment at 46-56 (RASQGISSWLA) is complementarity-determining-1. Positions 57 to 71 (WYQQKPEKAPKSLIY) are framework-2. A complementarity-determining-2 region spans residues 72–78 (AASSLQS). Positions 79-110 (GVPSRFSGSGSGTDFTLTISSLQPEDFATYYC) are framework-3. The segment at 111–117 (QQYNSYP) is complementarity-determining-3.

In terms of assembly, immunoglobulins are composed of two identical heavy chains and two identical light chains; disulfide-linked.

The protein localises to the secreted. It localises to the cell membrane. In terms of biological role, v region of the variable domain of immunoglobulin light chains that participates in the antigen recognition. Immunoglobulins, also known as antibodies, are membrane-bound or secreted glycoproteins produced by B lymphocytes. In the recognition phase of humoral immunity, the membrane-bound immunoglobulins serve as receptors which, upon binding of a specific antigen, trigger the clonal expansion and differentiation of B lymphocytes into immunoglobulins-secreting plasma cells. Secreted immunoglobulins mediate the effector phase of humoral immunity, which results in the elimination of bound antigens. The antigen binding site is formed by the variable domain of one heavy chain, together with that of its associated light chain. Thus, each immunoglobulin has two antigen binding sites with remarkable affinity for a particular antigen. The variable domains are assembled by a process called V-(D)-J rearrangement and can then be subjected to somatic hypermutations which, after exposure to antigen and selection, allow affinity maturation for a particular antigen. The chain is Immunoglobulin kappa variable 1D-16 from Homo sapiens (Human).